The chain runs to 400 residues: CCA-adding enzyme (400 aa).

ATP is bound by residues G27 and R30. Residues G27 and R30 each contribute to the CTP site. Mg(2+) is bound by residues D40 and D42. Residues R111, D154, R157, R160, and R163 each contribute to the ATP site. 5 residues coordinate CTP: R111, D154, R157, R160, and R163.

The protein belongs to the tRNA nucleotidyltransferase/poly(A) polymerase family. Bacterial CCA-adding enzyme type 3 subfamily. As to quaternary structure, homodimer. Mg(2+) serves as cofactor.

The enzyme catalyses a tRNA precursor + 2 CTP + ATP = a tRNA with a 3' CCA end + 3 diphosphate. It carries out the reaction a tRNA with a 3' CCA end + 2 CTP + ATP = a tRNA with a 3' CCACCA end + 3 diphosphate. Its function is as follows. Catalyzes the addition and repair of the essential 3'-terminal CCA sequence in tRNAs without using a nucleic acid template. Adds these three nucleotides in the order of C, C, and A to the tRNA nucleotide-73, using CTP and ATP as substrates and producing inorganic pyrophosphate. tRNA 3'-terminal CCA addition is required both for tRNA processing and repair. Also involved in tRNA surveillance by mediating tandem CCA addition to generate a CCACCA at the 3' terminus of unstable tRNAs. While stable tRNAs receive only 3'-terminal CCA, unstable tRNAs are marked with CCACCA and rapidly degraded. This is CCA-adding enzyme from Bacillus pumilus (strain SAFR-032).